Here is a 326-residue protein sequence, read N- to C-terminus: Beta-ketoacyl-[acyl-carrier-protein] synthase III (326 aa).

Residues C116 and H253 contribute to the active site. The ACP-binding stretch occupies residues 254–258 (QANIR). Residue N283 is part of the active site.

It belongs to the thiolase-like superfamily. FabH family. In terms of assembly, homodimer.

The protein localises to the cytoplasm. It carries out the reaction malonyl-[ACP] + acetyl-CoA + H(+) = 3-oxobutanoyl-[ACP] + CO2 + CoA. It participates in lipid metabolism; fatty acid biosynthesis. In terms of biological role, catalyzes the condensation reaction of fatty acid synthesis by the addition to an acyl acceptor of two carbons from malonyl-ACP. Catalyzes the first condensation reaction which initiates fatty acid synthesis and may therefore play a role in governing the total rate of fatty acid production. Possesses both acetoacetyl-ACP synthase and acetyl transacylase activities. Its substrate specificity determines the biosynthesis of branched-chain and/or straight-chain of fatty acids. The sequence is that of Beta-ketoacyl-[acyl-carrier-protein] synthase III from Jannaschia sp. (strain CCS1).